We begin with the raw amino-acid sequence, 104 residues long: Small ribosomal subunit protein uS10 (104 aa).

This sequence belongs to the universal ribosomal protein uS10 family. As to quaternary structure, part of the 30S ribosomal subunit.

Functionally, involved in the binding of tRNA to the ribosomes. In Ruegeria pomeroyi (strain ATCC 700808 / DSM 15171 / DSS-3) (Silicibacter pomeroyi), this protein is Small ribosomal subunit protein uS10.